Consider the following 252-residue polypeptide: Probable transcriptional regulatory protein RT0442 (252 aa).

The interval 1 to 22 is disordered; it reads MSGHSKFKNIQHRKGAQDKKKS.

The protein belongs to the TACO1 family.

The protein resides in the cytoplasm. The protein is Probable transcriptional regulatory protein RT0442 of Rickettsia typhi (strain ATCC VR-144 / Wilmington).